A 134-amino-acid chain; its full sequence is Loki profilin-1 (134 aa).

A loki loop region spans residues 55–62 (LALGKKGI).

Belongs to the Asgard profilin family.

It is found in the cytoplasm. The protein localises to the cytoskeleton. Its activity is regulated as follows. Inhibition of rabbit actin polymerization is reduced by phosphatidylinositol-(4,5)-P2(1,2-dipalmitoyl), a soluble form of the phospholipid phosphatidylinositol, suggesting an unknown lipid might regulate actin-profilin interaction in vivo. Functionally, binds to actin and affects the structure of the cytoskeleton. At high concentrations inhibits spontaneous rabbit actin nucleation. This strongly suggests this archaea has a profilin-regulated actin system, and actin-type genes can be identified in this organism. The chain is Loki profilin-1 from Lokiarchaeum sp. (strain GC14_75).